Here is a 185-residue protein sequence, read N- to C-terminus: p53 apoptosis effector related to PMP-22 (185 aa).

4 helical membrane-spanning segments follow: residues 13–33, 74–94, 105–125, and 143–163; these read WILPMLLLFAIIFDIIAIAAQ, VAALMIIGLIILIFAFIISLV, LPFIGLLLILAVIVQIIALII, and WAYGFGWGATILTLGCAILFC.

The protein belongs to the TMEM47 family.

The protein localises to the cell junction. The protein resides in the desmosome. Its subcellular location is the cell membrane. It is found in the cytoplasm. Its function is as follows. Component of intercellular desmosome junctions. Positively regulates apoptosis in the early-stage embryo in response to UV irradiation, this is partially dependent on tp53 activation. Required for the survival of cell populations in the developing notochord and skin, therefore required for normal embryogenesis beyond 30 hpf. Acts as a positive regulator of endothelial cell apoptosis in response to blood flow-derived shear stress. The polypeptide is p53 apoptosis effector related to PMP-22 (Danio rerio (Zebrafish)).